The primary structure comprises 545 residues: uncharacterized protein (545 aa).

Basic and acidic residues-rich tracts occupy residues Pro-34–Thr-44 and Pro-53–Arg-63. Disordered stretches follow at residues Pro-34–Asn-98, Gln-269–Ser-296, and Glu-415–Glu-444. Polar residues predominate over residues Thr-69–Ala-78. The span at Glu-415–Glu-428 shows a compositional bias: basic and acidic residues. Residues Glu-429–Ser-441 are compositionally biased toward polar residues.

This is an uncharacterized protein from Mus musculus (Mouse).